A 448-amino-acid polypeptide reads, in one-letter code: Serine/threonine-protein phosphatase 2A regulatory subunit B'' subunit gamma (448 aa).

EF-hand domains lie at 268 to 303 (PSALRVYGQYLNLDKDHNGMLSKEELSRYGTGTLTC) and 336 to 371 (KEPAALQYIFKLLDIENKGSLNVFSLNFFFRAIQEQ). Residues Asp281, Asp283, Asn285, Met287, and Glu292 each contribute to the Ca(2+) site.

The protein localises to the nucleus. It localises to the cytoplasm. In terms of biological role, possible role in the regulation of cell death. The polypeptide is Serine/threonine-protein phosphatase 2A regulatory subunit B'' subunit gamma (ppp2r3c) (Xenopus tropicalis (Western clawed frog)).